The sequence spans 283 residues: Phosphatidylserine decarboxylase proenzyme (283 aa).

Catalysis depends on charge relay system; for autoendoproteolytic cleavage activity residues Asp-88, His-145, and Ser-248. Ser-248 (schiff-base intermediate with substrate; via pyruvic acid; for decarboxylase activity) is an active-site residue. Ser-248 carries the post-translational modification Pyruvic acid (Ser); by autocatalysis.

This sequence belongs to the phosphatidylserine decarboxylase family. PSD-B subfamily. Prokaryotic type I sub-subfamily. Heterodimer of a large membrane-associated beta subunit and a small pyruvoyl-containing alpha subunit. Pyruvate is required as a cofactor. In terms of processing, is synthesized initially as an inactive proenzyme. Formation of the active enzyme involves a self-maturation process in which the active site pyruvoyl group is generated from an internal serine residue via an autocatalytic post-translational modification. Two non-identical subunits are generated from the proenzyme in this reaction, and the pyruvate is formed at the N-terminus of the alpha chain, which is derived from the carboxyl end of the proenzyme. The autoendoproteolytic cleavage occurs by a canonical serine protease mechanism, in which the side chain hydroxyl group of the serine supplies its oxygen atom to form the C-terminus of the beta chain, while the remainder of the serine residue undergoes an oxidative deamination to produce ammonia and the pyruvoyl prosthetic group on the alpha chain. During this reaction, the Ser that is part of the protease active site of the proenzyme becomes the pyruvoyl prosthetic group, which constitutes an essential element of the active site of the mature decarboxylase.

It is found in the cell membrane. The enzyme catalyses a 1,2-diacyl-sn-glycero-3-phospho-L-serine + H(+) = a 1,2-diacyl-sn-glycero-3-phosphoethanolamine + CO2. It participates in phospholipid metabolism; phosphatidylethanolamine biosynthesis; phosphatidylethanolamine from CDP-diacylglycerol: step 2/2. Its function is as follows. Catalyzes the formation of phosphatidylethanolamine (PtdEtn) from phosphatidylserine (PtdSer). This Methylibium petroleiphilum (strain ATCC BAA-1232 / LMG 22953 / PM1) protein is Phosphatidylserine decarboxylase proenzyme.